Here is a 391-residue protein sequence, read N- to C-terminus: Tumor susceptibility gene 101 protein (391 aa).

The residue at position 2 (Ala2) is an N-acetylalanine. The UEV domain maps to 2-145 (AVSESQLKKM…GEEPPVFSRP (144 aa)). Positions 159-163 (PPNTS) are interaction with CEP55. Positions 195 to 222 (GPYPATTSSQYPSQPPVTTAGPSRDGTI) are disordered. The span at 200–215 (TTSSQYPSQPPVTTAG) shows a compositional bias: polar residues. The residue at position 221 (Thr221) is a Phosphothreonine. Positions 238–317 (KLRWRMKEEM…NQSENNDIDE (80 aa)) form a coiled coil. The PTAP motif motif lies at 321–324 (PTAP). The SB domain maps to 323 to 391 (APLYKQILNL…RKTAGLSDLY (69 aa)).

It belongs to the ubiquitin-conjugating enzyme family. UEV subfamily. As to quaternary structure, component of the ESCRT-I complex (endosomal sorting complex required for transport I) which consists of TSG101, VPS28, a VPS37 protein (VPS37A to -D) and MVB12A or MVB12B in a 1:1:1:1 stoichiometry. Interacts with VPS37A, VPS37B and VPS37C. Interacts with DMAP1. Interacts with ubiquitin. Interacts with AATF. Interacts with stathmin and GMCL. Component of an ESCRT-I complex (endosomal sorting complex required for transport I) which consists of TSG101, VPS28, VPS37A and UBAP1 in a 1:1:1:1 stoichiometry. Interacts with HGS; the interaction mediates the association with the ESCRT-0 complex. Interacts with GGA1 and GGA3. Interacts (via UEV domain) with PDCD6IP/AIP1. Interacts with VPS28, SNF8 and VPS36. Self-associates. Interacts with MVB12A; the association appears to be mediated by the TSG101-VPS37 binary subcomplex. Interacts with VPS37D. Interacts with LRSAM1. Interacts with CEP55; the interaction is required for cytokinesis. Interacts with PDCD6. Interacts with LITAF. Interacts with MGRN1. Interacts with ARRDC1; recruits TSG101 to the plasma membrane. Post-translationally, monoubiquitinated at multiple sites by LRSAM1 and by MGRN1. Ubiquitination inactivates it, possibly by regulating its shuttling between an active membrane-bound protein and an inactive soluble form. Ubiquitination by MGRN1 requires the presence of UBE2D1.

It is found in the cytoplasm. The protein localises to the early endosome membrane. It localises to the late endosome membrane. Its subcellular location is the cytoskeleton. The protein resides in the microtubule organizing center. It is found in the centrosome. The protein localises to the midbody. It localises to the midbody ring. Its subcellular location is the nucleus. Its function is as follows. Component of the ESCRT-I complex, a regulator of vesicular trafficking process. Binds to ubiquitinated cargo proteins and is required for the sorting of endocytic ubiquitinated cargos into multivesicular bodies (MVBs). Mediates the association between the ESCRT-0 and ESCRT-I complex. Required for completion of cytokinesis; the function requires CEP55. May be involved in cell growth and differentiation. Acts as a negative growth regulator. Required for the exosomal release of SDCBP, CD63 and syndecan. It may also play a role in the extracellular release of microvesicles that differ from the exosomes. This is Tumor susceptibility gene 101 protein (Tsg101) from Rattus norvegicus (Rat).